An 873-amino-acid polypeptide reads, in one-letter code: Zinc finger X-linked protein ZXDB (873 aa).

Disordered regions lie at residues 1–23 (MEIPRLLPARGTPQGAGGGGCPA), 48–120 (RGAQ…GGSR), 138–184 (VETV…LSAV), 240–259 (EPGVAPFPQPQPPPQPGALI), and 301–330 (AEPAACPAPPEEEAEAPAAAAAQSPRGPAG). 2 stretches are compositionally biased toward gly residues: residues 14 to 23 (QGAGGGGCPA) and 85 to 120 (SGGGRGGGAGGGGGGSGGGGGGGGGGGGGGGGGGSR). At Arg89 the chain carries Omega-N-methylarginine. The span at 150–165 (VRREEAGAGPRPERRQ) shows a compositional bias: basic and acidic residues. Over residues 240–255 (EPGVAPFPQPQPPPQP) the composition is skewed to pro residues. Residues 316 to 327 (APAAAAAQSPRG) are compositionally biased toward low complexity. 10 consecutive C2H2-type zinc fingers follow at residues 340-364 (YLCPEAQCGQTFAKKHQLKVHLLTH), 373-397 (FKCPLSGCGWTFTTSYKLKRHLQSH), 403-427 (FGCPVQGCGKSFTTVYNLKAHMKGH), 433-455 (FKCEVCEESFPTQAKLSTHQRSH), 462-486 (YQCAFSGCKKTFITVSALFSHNRAH), 493-517 (FACSFPGCSKQYDKACRLKIHLRSH), 523-547 (FLCDFDGCGWNFTSMSKLLRHKRKH), 553-577 (FTCPVEGCGKSFTRAEHLKGHSITH), 583-607 (FVCPVEGCCARFSARSSLYIHSKKH), and 616-641 (SRCPVPTCNKLFTSKHSMKTHMTKRH). A required for interaction with ZXDC region spans residues 340–646 (YLCPEAQCGQ…MTKRHNLSQD (307 aa)). Residues 645–776 (QDLLAQLEAA…DMDDVSAGNV (132 aa)) form a required for transcriptional activation region.

The protein belongs to the ZXD family. Self-associates. Interacts with ZXDC and CIITA.

The protein localises to the nucleus. Functionally, cooperates with CIITA to promote transcription of MHC class I and MHC class II genes. The chain is Zinc finger X-linked protein ZXDB (Zxdb) from Mus musculus (Mouse).